The sequence spans 120 residues: Transmembrane protein 010R (120 aa).

The next 2 helical transmembrane spans lie at 40–60 (FCGA…ATAT) and 72–92 (SIFF…VWFL).

It belongs to the IIV-6 010R family.

The protein localises to the membrane. The polypeptide is Transmembrane protein 010R (Invertebrate iridescent virus 6 (IIV-6)).